Here is a 372-residue protein sequence, read N- to C-terminus: MENGEAKQSVPLLTPYKMGRFNLSHRVVLAPLTRQRSYGNVPQPHAAIYYSQRTTPGGFLITEATGVSDTAQGYQDTPGIWTKEHVEAWKPIVDAVHAKGGIFFCQIWHVGRVSNSGFQPNGKAPISCSDKPLMPQIRSNGIDEALFTPPRRLGIEEIPGIVNDFRLAARNAMEAGFDGVEIHGANGYLIDQFMKDTVNDRTDEYGGSLQNRCKFPLEIVDAVAKEIGPDRVGIRLSPFADYMESGDTNPGALGLYMAESLNKYGILYCHVIEARMKTMGEVHACPHTLMPMRKAFKGTFISAGGFTREDGNEAVSKGRTDLVAYGRWFLANPDLPKRFQVDAPLNKYDRPTFYTSDPVVGYTDYPFLESTA.

An N-acetylmethionine modification is found at methionine 1. Residues 31–33, alanine 64, and glutamine 106 each bind FMN; that span reads PLT. Histidine 183 is a substrate binding site. Tyrosine 188 serves as the catalytic Proton donor. Arginine 235 is a binding site for FMN. Arginine 275 provides a ligand contact to substrate. Residues 303–305 and 326–327 each bind FMN; these read AGG and GR.

This sequence belongs to the NADH:flavin oxidoreductase/NADH oxidase family. It depends on FMN as a cofactor. In terms of tissue distribution, mostly expressed in roots, also present in leaves, shoots and flowers. More abundant in cotyledons. In more details, expressed in peduncles, sepals, petals, around the abscission zone of siliques, maturing siliques and developing seeds.

Its subcellular location is the cytoplasm. The catalysed reaction is (1S,2S)-OPC-8 + NADP(+) = (9S,13S,15Z)-12-oxophyto-10,15-dienoate + NADPH + H(+). The protein operates within lipid metabolism; oxylipin biosynthesis. In terms of biological role, specifically cleaves olefinic bonds in alpha,beta-unsaturated carbonyls and may be involved in detoxification or modification of these reactive compounds. May be involved in the biosynthesis or metabolism of oxylipin signaling molecules. In vitro, reduces 9R,13R-12-oxophytodienoic acid (9R,13R-OPDA) to 9R,13R-OPC-8:0, but only poorly 9S,13S-OPDA, the natural precursor of jasmonic acid. Can detoxify the explosive 2,4,6-trinitrotoluene (TNT) in vitro and in vivo by catalyzing its nitroreduction to form hydroxylamino-dinitrotoluene (HADNT). The sequence is that of 12-oxophytodienoate reductase 1 from Arabidopsis thaliana (Mouse-ear cress).